Consider the following 422-residue polypeptide: UDP-N-acetylmuramoylalanine--D-glutamate ligase (422 aa).

102-108 lines the ATP pocket; it reads GTNGKTT.

The protein belongs to the MurCDEF family.

Its subcellular location is the cytoplasm. It catalyses the reaction UDP-N-acetyl-alpha-D-muramoyl-L-alanine + D-glutamate + ATP = UDP-N-acetyl-alpha-D-muramoyl-L-alanyl-D-glutamate + ADP + phosphate + H(+). It participates in cell wall biogenesis; peptidoglycan biosynthesis. Its function is as follows. Cell wall formation. Catalyzes the addition of glutamate to the nucleotide precursor UDP-N-acetylmuramoyl-L-alanine (UMA). The sequence is that of UDP-N-acetylmuramoylalanine--D-glutamate ligase from Helicobacter pylori (strain ATCC 700392 / 26695) (Campylobacter pylori).